The following is a 634-amino-acid chain: Sodium-dependent multivitamin transporter (634 aa).

12 helical membrane passes run 23 to 43 (FSVV…VIGL), 65 to 85 (MGCL…VAIL), 100 to 120 (FLGC…IPVF), 142 to 162 (ICGT…ALYA), 175 to 195 (LWLS…LGGL), 207 to 227 (LIMF…VGGL), 255 to 275 (FWTL…VNQA), 295 to 315 (AVFP…LVMF), 350 to 370 (LPGL…SSAF), 403 to 423 (FAYG…GSVL), 427 to 447 (LSIF…GMFF), and 455 to 475 (AIVG…GSIV). Residues Asn-488 and Asn-497 are each glycosylated (N-linked (GlcNAc...) asparagine). The helical transmembrane segment at 526–546 (LWYSAHNSTTVIAVGLIVSLL) threads the bilayer.

Belongs to the sodium:solute symporter (SSF) (TC 2.A.21) family. As to quaternary structure, interacts with PDZD11. Expressed in the jejunum (at protein level). Expressed in lung, skeletal muscle, heart, brain, kidney, intestine, liver, and placenta.

It localises to the cell membrane. The protein localises to the apical cell membrane. It catalyses the reaction biotin(out) + 2 Na(+)(out) = biotin(in) + 2 Na(+)(in). The enzyme catalyses (R)-pantothenate(out) + 2 Na(+)(out) = (R)-pantothenate(in) + 2 Na(+)(in). It carries out the reaction (R)-lipoate(out) + 2 Na(+)(out) = (R)-lipoate(in) + 2 Na(+)(in). The catalysed reaction is iodide(out) + 2 Na(+)(out) = iodide(in) + 2 Na(+)(in). Functionally, sodium-dependent multivitamin transporter that mediates the electrogenic transport of pantothenate, biotin, lipoate and iodide. Functions as a Na(+)-coupled substrate symporter where the stoichiometry of Na(+):substrate is 2:1, creating an electrochemical Na(+) gradient used as driving force for substrate uptake. Required for biotin and pantothenate uptake in the intestine across the brush border membrane. Plays a role in the maintenance of intestinal mucosa integrity, by providing the gut mucosa with biotin. Contributes to the luminal uptake of biotin and pantothenate into the brain across the blood-brain barrier. This is Sodium-dependent multivitamin transporter from Rattus norvegicus (Rat).